The primary structure comprises 321 residues: Tyrosine recombinase XerC (321 aa).

In terms of domain architecture, Core-binding (CB) spans 16 to 107; it reads PSIAQEMTRW…GLRSFGRFLE (92 aa). The Tyr recombinase domain maps to 128 to 315; it reads SLPKPLPMAS…DSERLLEVYA (188 aa). Residues Arg173, Lys199, His267, Arg270, and His293 contribute to the active site. Tyr302 serves as the catalytic O-(3'-phospho-DNA)-tyrosine intermediate.

Belongs to the 'phage' integrase family. XerC subfamily. In terms of assembly, forms a cyclic heterotetrameric complex composed of two molecules of XerC and two molecules of XerD.

The protein localises to the cytoplasm. Its function is as follows. Site-specific tyrosine recombinase, which acts by catalyzing the cutting and rejoining of the recombining DNA molecules. The XerC-XerD complex is essential to convert dimers of the bacterial chromosome into monomers to permit their segregation at cell division. It also contributes to the segregational stability of plasmids. The chain is Tyrosine recombinase XerC from Bradyrhizobium diazoefficiens (strain JCM 10833 / BCRC 13528 / IAM 13628 / NBRC 14792 / USDA 110).